The sequence spans 110 residues: NADH-quinone oxidoreductase subunit K (110 aa).

The next 3 membrane-spanning stretches (helical) occupy residues leucine 13–methionine 33, isoleucine 41–valine 61, and isoleucine 73–tyrosine 93.

It belongs to the complex I subunit 4L family. NDH-1 is composed of 14 different subunits. Subunits NuoA, H, J, K, L, M, N constitute the membrane sector of the complex.

The protein resides in the cell inner membrane. The catalysed reaction is a quinone + NADH + 5 H(+)(in) = a quinol + NAD(+) + 4 H(+)(out). Its function is as follows. NDH-1 shuttles electrons from NADH, via FMN and iron-sulfur (Fe-S) centers, to quinones in the respiratory chain. The immediate electron acceptor for the enzyme in this species is believed to be ubiquinone. Couples the redox reaction to proton translocation (for every two electrons transferred, four hydrogen ions are translocated across the cytoplasmic membrane), and thus conserves the redox energy in a proton gradient. The sequence is that of NADH-quinone oxidoreductase subunit K from Rickettsia typhi (strain ATCC VR-144 / Wilmington).